Here is a 131-residue protein sequence, read N- to C-terminus: Classical arabinogalactan protein 2 (131 aa).

Positions 1-21 (MNSKAMQALIFLGFLATSCLA) are cleaved as a signal peptide. Glutamine 22 is modified (pyrrolidone carboxylic acid). 5 positions are modified to 4-hydroxyproline: proline 24, proline 26, proline 28, proline 34, and proline 35. O-linked (Ara...) hydroxyproline glycosylation is found at proline 24, proline 26, proline 28, proline 34, and proline 35. The tract at residues 24-106 (PAPAPTTVTP…PGPDGAADAP (83 aa)) is disordered. Pro residues-rich tracts occupy residues 25-38 (APAP…PTAL) and 49-64 (IASP…PAPT). 2 stretches are compositionally biased toward low complexity: residues 65–76 (TSPTTSPVASPP) and 90–106 (TPTS…ADAP). Serine 107 carries GPI-anchor amidated serine lipidation. The propeptide at 108–131 (AAWANKAFLVGTAVAGALYAVVLA) is removed in mature form.

This sequence belongs to the classical AGP family. O-glycosylated on hydroxyprolines; noncontiguous hydroxylproline residues are glycosylated with arabinogalactan.

It is found in the cell membrane. Its function is as follows. Proteoglycan that seems to be implicated in diverse developmental roles such as differentiation, cell-cell recognition, embryogenesis and programmed cell death. This chain is Classical arabinogalactan protein 2 (AGP2), found in Arabidopsis thaliana (Mouse-ear cress).